The primary structure comprises 185 residues: Large ribosomal subunit protein uL5 (185 aa).

This sequence belongs to the universal ribosomal protein uL5 family. In terms of assembly, part of the 50S ribosomal subunit; part of the 5S rRNA/L5/L18/L25 subcomplex. Contacts the 5S rRNA and the P site tRNA. Forms a bridge to the 30S subunit in the 70S ribosome.

Functionally, this is one of the proteins that bind and probably mediate the attachment of the 5S RNA into the large ribosomal subunit, where it forms part of the central protuberance. In the 70S ribosome it contacts protein S13 of the 30S subunit (bridge B1b), connecting the 2 subunits; this bridge is implicated in subunit movement. Contacts the P site tRNA; the 5S rRNA and some of its associated proteins might help stabilize positioning of ribosome-bound tRNAs. The chain is Large ribosomal subunit protein uL5 from Protochlamydia amoebophila (strain UWE25).